The following is a 227-amino-acid chain: UPF0173 metal-dependent hydrolase SSO0099 (227 aa).

Belongs to the UPF0173 family.

The chain is UPF0173 metal-dependent hydrolase SSO0099 from Saccharolobus solfataricus (strain ATCC 35092 / DSM 1617 / JCM 11322 / P2) (Sulfolobus solfataricus).